Reading from the N-terminus, the 74-residue chain is Omega-conotoxin-like PuIIA (74 aa).

A signal peptide spans 1–22 (MKLTCVVIVAVLFLTACQLITA). Positions 23-46 (ETYSRGEQKHRALSSTDKNSKLTR) are excised as a propeptide. 3 disulfides stabilise this stretch: Cys48–Cys62, Cys55–Cys66, and Cys61–Cys73.

The protein belongs to the conotoxin O1 superfamily. In terms of tissue distribution, expressed by the venom duct.

Its subcellular location is the secreted. Omega-conotoxins act at presynaptic membranes, they bind and block voltage-gated calcium channels (Cav). The polypeptide is Omega-conotoxin-like PuIIA (Conus pulicarius (Flea-bitten cone)).